Consider the following 388-residue polypeptide: Endoglucanase 3 (388 aa).

Residues 1–16 form the signal peptide; that stretch reads MKHSVLAGLFATGALA. The CBM1 domain maps to 17-52; sequence QGGAWQQCGGVGFSGSTSCVSGYTCVYLNDWYSQCQ. 2 disulfide bridges follow: Cys-24–Cys-41 and Cys-35–Cys-51. Residues 53–91 form a linker region; sequence PQPTTLRTTTTPGATSTTRSAPAATSTTPAKGKFKWFGI. The disordered stretch occupies residues 56 to 81; sequence TTLRTTTTPGATSTTRSAPAATSTTP. N-linked (GlcNAc...) asparagine glycosylation is found at Asn-92 and Asn-155. The segment at 92-388 is catalytic; that stretch reads NQSCAEFGKG…YNSLLKKYVP (297 aa). Residue Glu-215 is the Proton donor of the active site. Residue Asn-259 is glycosylated (N-linked (GlcNAc...) asparagine). The active-site Nucleophile is the Glu-322.

It belongs to the glycosyl hydrolase 5 (cellulase A) family.

It catalyses the reaction Endohydrolysis of (1-&gt;4)-beta-D-glucosidic linkages in cellulose, lichenin and cereal beta-D-glucans.. The protein is Endoglucanase 3 (CMC3) of Humicola insolens (Soft-rot fungus).